Reading from the N-terminus, the 314-residue chain is Formate-nitrite transporter (314 aa).

Residues 1-47 (MSKGKSKYVIDPISVKTACTSEESYIRCVEYGKGKAHYPNLSLLAKA) are Cytoplasmic-facing. The helical transmembrane segment at 48-68 (ILAGVFVGVCAHASGIAGGHF) threads the bilayer. Topologically, residues 69 to 78 (YYHKLREYVG) are extracellular. A helical transmembrane segment spans residues 79–99 (ISMSAFVYGFTFPIAFLCIIA). Residues 100–128 (TGSDLFTGNTLAVTTALLQRKVSLLQYLR) lie on the Cytoplasmic side of the membrane. The helical transmembrane segment at 129–149 (VMSISLFGNYLGAVSFAFFVS) threads the bilayer. Residues 150-185 (HLSGAYEKHTDVTKNHIFQFLNDIAEKKISHTFIQC) are Extracellular-facing. A helical membrane pass occupies residues 186-206 (ICLAIGCNIFVCLAVYFVLTI). The Cytoplasmic portion of the chain corresponds to 207-211 (KDGSG). A helical transmembrane segment spans residues 212–232 (MVFSVFFAVYAFAIAGYEHII). Residues 233–257 (ANMYTLNLALMVEAKVTWSKVYFHN) are Extracellular-facing. A helical transmembrane segment spans residues 258–278 (LLPTLIGNYIAGALVLACPLF). The Cytoplasmic portion of the chain corresponds to 279–314 (YIYRNSYRDYERTRGDGSNCGLRSLSIEMQNGSNGN).

This sequence belongs to the FNT transporter (TC 1.A.16) family. As to quaternary structure, homopentamer.

It localises to the cell membrane. The protein resides in the vacuole membrane. It catalyses the reaction (S)-lactate(in) + H(+)(in) = (S)-lactate(out) + H(+)(out). The enzyme catalyses formate(in) + H(+)(in) = formate(out) + H(+)(out). The catalysed reaction is pyruvate(out) + H(+)(out) = pyruvate(in) + H(+)(in). It carries out the reaction acetate(out) + H(+)(out) = acetate(in) + H(+)(in). With respect to regulation, inhibited by the Malaria Box compound MMV007839 and its derivatives BH296 and BH267.meta. In terms of biological role, monocarboxylate-proton symporter that mediates the efflux of the waste product lactate in the intraerythrocytic parasites; active in acidic-to-neutral pH range. Transports L-lactate. In Plasmodium knowlesi (strain H), this protein is Formate-nitrite transporter.